The following is a 121-amino-acid chain: Neuromedin-B (121 aa).

The first 24 residues, 1–24 (MTRQAGSSWLLRGLLLFALFASGV), serve as a signal peptide directing secretion. At methionine 56 the chain carries Methionine amide. A propeptide spanning residues 60–121 (SLEPPSLSLV…RRLLEPLLQK (62 aa)) is cleaved from the precursor.

This sequence belongs to the bombesin/neuromedin-B/ranatensin family. In terms of tissue distribution, in the hindbrain, expressed in the medulla surrounding the lateral half of the facial nucleus. Also expressed in the olfactory bulb and hippocampus. Detected in a subset of neurons distributed throughout the retrotrapezoid nucleus/parafacial respiratory group (RTN/pFRG). Within the RTN/pFRG, expressed in neuronal subpopulations distinct from those expressing Grp. Expressed in lung.

Its subcellular location is the secreted. It localises to the cell projection. It is found in the neuron projection. Stimulates smooth muscle contraction. Induces sighing by acting directly on the pre-Botzinger complex, a cluster of several thousand neurons in the ventrolateral medulla responsible for inspiration during respiratory activity. Contributes to the induction of sneezing following exposure to chemical irritants or allergens which causes release of NMB by nasal sensory neurons and activation of NMBR-expressing neurons in the sneeze-evoking region of the brainstem. These in turn activate neurons of the caudal ventral respiratory group, giving rise to the sneeze reflex. Contributes to induction of acute itch, possibly through activation of the NMBR receptor on dorsal root ganglion neurons. Increases expression of NMBR and steroidogenic mediators STAR, CYP11A1 and HSD3B1 in Leydig cells, induces secretion of testosterone by Leydig cells and also promotes Leydig cell proliferation. Plays a role in the innate immune response to influenza A virus infection by enhancing interferon alpha expression and reducing expression of IL6. Plays a role in CSF1-induced proliferation of osteoclast precursors by contributing to the positive regulation of the expression of the CSF1 receptor CSF1R. The chain is Neuromedin-B (Nmb) from Mus musculus (Mouse).